A 373-amino-acid polypeptide reads, in one-letter code: Cytoplasmic tRNA 2-thiolation protein 1 (373 aa).

It belongs to the TtcA family. CTU1/NCS6/ATPBD3 subfamily.

The protein localises to the cytoplasm. It participates in tRNA modification; 5-methoxycarbonylmethyl-2-thiouridine-tRNA biosynthesis. Functionally, plays a central role in 2-thiolation of mcm(5)S(2)U at tRNA wobble positions of tRNA(Lys), tRNA(Glu) and tRNA(Gln). Directly binds tRNAs and probably acts by catalyzing adenylation of tRNAs, an intermediate required for 2-thiolation. It is unclear whether it acts as a sulfurtransferase that transfers sulfur from thiocarboxylated URM1 onto the uridine of tRNAs at wobble position. Prior mcm(5) tRNA modification by the elongator complex is required for 2-thiolation. May also be involved in protein urmylation. In Malassezia globosa (strain ATCC MYA-4612 / CBS 7966) (Dandruff-associated fungus), this protein is Cytoplasmic tRNA 2-thiolation protein 1.